The sequence spans 115 residues: Protein translation factor SUI1 homolog (115 aa).

It belongs to the SUI1 family.

Functionally, probably involved in translation. This chain is Protein translation factor SUI1 homolog, found in Sporobolus stapfianus (Ressurection grass).